Consider the following 538-residue polypeptide: Bifunctional purine biosynthesis protein PurH (538 aa).

The MGS-like domain maps to 6-158 (KHIPAPDLHR…KNHAYVATVV (153 aa)).

Belongs to the PurH family.

It catalyses the reaction (6R)-10-formyltetrahydrofolate + 5-amino-1-(5-phospho-beta-D-ribosyl)imidazole-4-carboxamide = 5-formamido-1-(5-phospho-D-ribosyl)imidazole-4-carboxamide + (6S)-5,6,7,8-tetrahydrofolate. The catalysed reaction is IMP + H2O = 5-formamido-1-(5-phospho-D-ribosyl)imidazole-4-carboxamide. The protein operates within purine metabolism; IMP biosynthesis via de novo pathway; 5-formamido-1-(5-phospho-D-ribosyl)imidazole-4-carboxamide from 5-amino-1-(5-phospho-D-ribosyl)imidazole-4-carboxamide (10-formyl THF route): step 1/1. Its pathway is purine metabolism; IMP biosynthesis via de novo pathway; IMP from 5-formamido-1-(5-phospho-D-ribosyl)imidazole-4-carboxamide: step 1/1. The chain is Bifunctional purine biosynthesis protein PurH from Brucella anthropi (strain ATCC 49188 / DSM 6882 / CCUG 24695 / JCM 21032 / LMG 3331 / NBRC 15819 / NCTC 12168 / Alc 37) (Ochrobactrum anthropi).